Reading from the N-terminus, the 173-residue chain is Translation initiation factor IF-3 (173 aa).

Belongs to the IF-3 family. As to quaternary structure, monomer.

It is found in the cytoplasm. Its function is as follows. IF-3 binds to the 30S ribosomal subunit and shifts the equilibrium between 70S ribosomes and their 50S and 30S subunits in favor of the free subunits, thus enhancing the availability of 30S subunits on which protein synthesis initiation begins. The sequence is that of Translation initiation factor IF-3 from Methylorubrum populi (strain ATCC BAA-705 / NCIMB 13946 / BJ001) (Methylobacterium populi).